We begin with the raw amino-acid sequence, 207 residues long: Adenylyl-sulfate kinase (207 aa).

34-41 (GLSGSGKS) provides a ligand contact to ATP. S108 functions as the Phosphoserine intermediate in the catalytic mechanism.

Belongs to the APS kinase family.

It carries out the reaction adenosine 5'-phosphosulfate + ATP = 3'-phosphoadenylyl sulfate + ADP + H(+). It functions in the pathway sulfur metabolism; hydrogen sulfide biosynthesis; sulfite from sulfate: step 2/3. Its function is as follows. Catalyzes the synthesis of activated sulfate. This chain is Adenylyl-sulfate kinase, found in Lactiplantibacillus plantarum (strain ATCC BAA-793 / NCIMB 8826 / WCFS1) (Lactobacillus plantarum).